The primary structure comprises 754 residues: ATP-dependent zinc metalloprotease FtsH (754 aa).

The Cytoplasmic segment spans residues 1–9; the sequence is MKQRMKKPS. Residues 10–30 traverse the membrane as a helical segment; the sequence is LGTFILILILIGILAYVLWQF. The Extracellular segment spans residues 31–186; sequence LSPKLGYKSL…FDRPRGNFLS (156 aa). The helical transmembrane segment at 187–207 threads the bilayer; sequence SFIVPYIPFLLISLFGFWLFF. Residues 208-754 lie on the Cytoplasmic side of the membrane; sequence RLSQNSQAGG…ESKIDSSKEQ (547 aa). Residue 277 to 284 coordinates ATP; the sequence is GPPGTGKT. A Zn(2+)-binding site is contributed by H499. Residue E500 is part of the active site. The Zn(2+) site is built by H503 and D577. The interval 713–754 is disordered; the sequence is QEKSYENEDQNQNSLEAINYNIDDQDDDKNDSESKIDSSKEQ. Residues 743–754 are compositionally biased toward basic and acidic residues; sequence DSESKIDSSKEQ.

The protein in the central section; belongs to the AAA ATPase family. This sequence in the C-terminal section; belongs to the peptidase M41 family. Homohexamer. Zn(2+) is required as a cofactor.

The protein resides in the cell membrane. In terms of biological role, acts as a processive, ATP-dependent zinc metallopeptidase for both cytoplasmic and membrane proteins. Plays a role in the quality control of integral membrane proteins. This chain is ATP-dependent zinc metalloprotease FtsH, found in Mesomycoplasma conjunctivae (strain ATCC 25834 / NCTC 10147 / HRC/581) (Mycoplasma conjunctivae).